The following is a 179-amino-acid chain: Repressor of phase 1 flagellin gene (179 aa).

Its function is as follows. Transcriptional repressor of the FliC phase-1 flagellin. This chain is Repressor of phase 1 flagellin gene (fljA), found in Salmonella abortus-equi.